The chain runs to 1285 residues: Nuclear pore complex protein NUP133 (1285 aa).

2 disordered regions span residues 1–53 (MFSP…PAPW) and 522–580 (EPPE…QTAR). The segment covering 31 to 41 (TPATQNRNNFI) has biased composition (polar residues). 2 stretches are compositionally biased toward basic and acidic residues: residues 523-544 (PPER…DETR) and 553-569 (TAGR…DKGN).

It belongs to the nucleoporin Nup133 family. In terms of assembly, part of the nuclear pore complex (NPC). The NPC has an eight-fold symmetrical structure comprising a central transport channel and two rings, the cytoplasmic and nuclear rings, to which eight filaments are attached. The cytoplasmic filaments have loose ends, while the nuclear filaments are joined in a distal ring, forming a nuclear basket. NPCs are highly dynamic in configuration and composition, and can be devided in 3 subcomplexes, the NUP62 subcomplex, the NUP107-160 subcomplex and the NUP93 subcomplex, containing approximately 30 different nucleoporin proteins.

The protein resides in the nucleus envelope. It is found in the nucleus. It localises to the nuclear pore complex. In Arabidopsis thaliana (Mouse-ear cress), this protein is Nuclear pore complex protein NUP133.